We begin with the raw amino-acid sequence, 71 residues long: Vitellogenin-B1 (71 aa).

An N-terminal signal peptide occupies residues 1-15 (MRGIILAQLLALAGS). A Vitellogenin domain is found at 24–71 (FSESKPYVYNYEGIILNGIPENGLARSGIKLNCKAEISGYAQRSYMLK).

Produced by the liver, secreted into the blood and then sequestered by receptor mediated endocytosis into growing oocytes, where it is generally cleaved, giving rise to the respective yolk components.

Its function is as follows. Precursor of the major egg-yolk proteins that are sources of nutrients during early development of oviparous organisms. This Xenopus laevis (African clawed frog) protein is Vitellogenin-B1.